Reading from the N-terminus, the 719-residue chain is T-cell immunomodulatory protein homolog (719 aa).

The signal sequence occupies residues 1–32; the sequence is MYNFLSCKKKSIILQVLLIICTYNILLNFVNI. Topologically, residues 33–677 are extracellular; that stretch reads FVNNNEKNHK…LSVNPSKKFY (645 aa). Residues Asn144, Asn277, Asn410, Asn540, and Asn659 are each glycosylated (N-linked (GlcNAc...) asparagine). Residues 678–697 traverse the membrane as a helical segment; it reads SILYITLICLSVIGVLIFIL. At 698–719 the chain is on the cytoplasmic side; it reads DRKEKVEDSKEELGFKSHFVIG.

The protein belongs to the TIP family.

The protein localises to the membrane. In terms of biological role, may protect the parasite against attack by the host immune system by immunomodulation. The chain is T-cell immunomodulatory protein homolog from Plasmodium falciparum (isolate 3D7).